The sequence spans 88 residues: Apolipoprotein C-I (88 aa).

A signal peptide spans 1–26 (MRLFISLPILIVVLAMALEGPAPAQA).

This sequence belongs to the apolipoprotein C1 family.

The protein localises to the secreted. Inhibitor of lipoprotein binding to the low density lipoprotein (LDL) receptor, LDL receptor-related protein, and very low density lipoprotein (VLDL) receptor. Associates with high density lipoproteins (HDL) and the triacylglycerol-rich lipoproteins in the plasma and makes up about 10% of the protein of the VLDL and 2% of that of HDL. Appears to interfere directly with fatty acid uptake and is also the major plasma inhibitor of cholesteryl ester transfer protein (CETP). Modulates the interaction of APOE with beta-migrating VLDL and inhibits binding of beta-VLDL to the LDL receptor-related protein. Binds free fatty acids and reduces their intracellular esterification. In Neotoma lepida (Desert woodrat), this protein is Apolipoprotein C-I (Apoc1).